Consider the following 521-residue polypeptide: Bifunctional purine biosynthesis protein PurH (521 aa).

The MGS-like domain maps to 1–145; that stretch reads MIKQALISVS…KNHRDVTVVV (145 aa).

It belongs to the PurH family.

The catalysed reaction is (6R)-10-formyltetrahydrofolate + 5-amino-1-(5-phospho-beta-D-ribosyl)imidazole-4-carboxamide = 5-formamido-1-(5-phospho-D-ribosyl)imidazole-4-carboxamide + (6S)-5,6,7,8-tetrahydrofolate. The enzyme catalyses IMP + H2O = 5-formamido-1-(5-phospho-D-ribosyl)imidazole-4-carboxamide. The protein operates within purine metabolism; IMP biosynthesis via de novo pathway; 5-formamido-1-(5-phospho-D-ribosyl)imidazole-4-carboxamide from 5-amino-1-(5-phospho-D-ribosyl)imidazole-4-carboxamide (10-formyl THF route): step 1/1. Its pathway is purine metabolism; IMP biosynthesis via de novo pathway; IMP from 5-formamido-1-(5-phospho-D-ribosyl)imidazole-4-carboxamide: step 1/1. The chain is Bifunctional purine biosynthesis protein PurH from Burkholderia pseudomallei (strain 1106a).